Reading from the N-terminus, the 721-residue chain is Polyribonucleotide nucleotidyltransferase (721 aa).

The Mg(2+) site is built by Asp-495 and Asp-501. The KH domain maps to 562–621 (PRLLSFRIDPELIGTVIGPGGRTIKGITERTNTKIDIEDGGIVTIASHDGAAAEEAQKII). Residues 631–699 (GEIFPGVVTR…SRGRINLTLR (69 aa)) enclose the S1 motif domain.

This sequence belongs to the polyribonucleotide nucleotidyltransferase family. Mg(2+) is required as a cofactor.

It localises to the cytoplasm. The enzyme catalyses RNA(n+1) + phosphate = RNA(n) + a ribonucleoside 5'-diphosphate. Functionally, involved in mRNA degradation. Catalyzes the phosphorolysis of single-stranded polyribonucleotides processively in the 3'- to 5'-direction. This is Polyribonucleotide nucleotidyltransferase from Prochlorococcus marinus subsp. pastoris (strain CCMP1986 / NIES-2087 / MED4).